The chain runs to 158 residues: 2-C-methyl-D-erythritol 2,4-cyclodiphosphate synthase (158 aa).

A divalent metal cation-binding residues include aspartate 8 and histidine 10. 4-CDP-2-C-methyl-D-erythritol 2-phosphate contacts are provided by residues aspartate 8–histidine 10 and histidine 34–serine 35. Histidine 42 contributes to the a divalent metal cation binding site. Residues aspartate 56–glycine 58, phenylalanine 61–aspartate 65, alanine 100–alanine 106, threonine 132–glutamate 135, phenylalanine 139, and arginine 142 each bind 4-CDP-2-C-methyl-D-erythritol 2-phosphate.

Belongs to the IspF family. Homotrimer. Requires a divalent metal cation as cofactor.

The enzyme catalyses 4-CDP-2-C-methyl-D-erythritol 2-phosphate = 2-C-methyl-D-erythritol 2,4-cyclic diphosphate + CMP. It participates in isoprenoid biosynthesis; isopentenyl diphosphate biosynthesis via DXP pathway; isopentenyl diphosphate from 1-deoxy-D-xylulose 5-phosphate: step 4/6. Its function is as follows. Involved in the biosynthesis of isopentenyl diphosphate (IPP) and dimethylallyl diphosphate (DMAPP), two major building blocks of isoprenoid compounds. Catalyzes the conversion of 4-diphosphocytidyl-2-C-methyl-D-erythritol 2-phosphate (CDP-ME2P) to 2-C-methyl-D-erythritol 2,4-cyclodiphosphate (ME-CPP) with a corresponding release of cytidine 5-monophosphate (CMP). The polypeptide is 2-C-methyl-D-erythritol 2,4-cyclodiphosphate synthase (Sodalis glossinidius (strain morsitans)).